Here is a 38-residue protein sequence, read N- to C-terminus: Bacteriocin BAC79 (38 aa).

Its activity is regulated as follows. The antimicrobial activity of BAC79 was completely lost after treatment with enzymes trypsin, pepsin, proteinase-K, and carboxypeptidase, while there was no loss of activity with either amylase or lipase. Has antibacterial activity against a wide spectrum of Gram-positive and Gram-negative bacteria, including L.monocytogenes which is inhibited through disruption of the cell membrane. In Weissella confusa (Lactobacillus confusus), this protein is Bacteriocin BAC79.